Reading from the N-terminus, the 212-residue chain is Uracil phosphoribosyltransferase (212 aa).

Residues Arg78, Arg103, and 130 to 138 (DPMLATGGS) each bind 5-phospho-alpha-D-ribose 1-diphosphate. Uracil-binding positions include Ile193 and 198-200 (GDA). Residue Asp199 participates in 5-phospho-alpha-D-ribose 1-diphosphate binding.

It belongs to the UPRTase family. Requires Mg(2+) as cofactor.

It catalyses the reaction UMP + diphosphate = 5-phospho-alpha-D-ribose 1-diphosphate + uracil. Its pathway is pyrimidine metabolism; UMP biosynthesis via salvage pathway; UMP from uracil: step 1/1. Its activity is regulated as follows. Allosterically activated by GTP. Functionally, catalyzes the conversion of uracil and 5-phospho-alpha-D-ribose 1-diphosphate (PRPP) to UMP and diphosphate. In Pseudomonas putida (strain ATCC 700007 / DSM 6899 / JCM 31910 / BCRC 17059 / LMG 24140 / F1), this protein is Uracil phosphoribosyltransferase.